Reading from the N-terminus, the 1432-residue chain is Probable ATP-dependent RNA helicase spindle-E (1432 aa).

The region spanning 125–292 is the Helicase ATP-binding domain; the sequence is MKAIRENTVV…FATKNGIPPV (168 aa). Residue 138–145 participates in ATP binding; the sequence is GETGCGKT. Residues 238 to 241 carry the DEAH box motif; it reads DEVH. Residues 342–525 form the Helicase C-terminal domain; sequence VIDNMERRTE…SSVLKAKELN (184 aa). The Tudor domain occupies 936-999; it reads AGSITKNLKL…RFMSNQLKRE (64 aa).

This sequence belongs to the DEAD box helicase family. DEAH subfamily.

Its subcellular location is the cytoplasm. It carries out the reaction ATP + H2O = ADP + phosphate + H(+). Functionally, probable ATP-binding RNA helicase which plays a central role during spermatogenesis and oogenesis by repressing transposable elements and preventing their mobilization, which is essential for the germline integrity. Acts via the piRNA metabolic process, which mediates the repression of transposable elements during meiosis by forming complexes composed of piRNAs and Piwi and govern the methylation and subsequent repression of transposons. Involved in the repression of LTR retrotransposon copia. Also involved in telomere regulation by repressing specialized telomeric retroelements HeT-A, TAHRE, and TART; Drosophila telomeres being maintained by transposition of specialized telomeric retroelements. Involved in telomeric trans-silencing, a repression mechanism by which a transposon or a transgene inserted in subtelomeric heterochromatin has the capacity to repress in trans in the female germline, a homologous transposon, or transgene located in euchromatin. Involved in the repression of testis-expressed Stellate genes by the homologous Su(Ste) repeats. Required for anteroposterior and dorsoventral axis formation during oogenesis. This chain is Probable ATP-dependent RNA helicase spindle-E (spn-E), found in Drosophila willistoni (Fruit fly).